The sequence spans 427 residues: Glutamate-1-semialdehyde 2,1-aminomutase (427 aa).

Residue K265 is modified to N6-(pyridoxal phosphate)lysine.

It belongs to the class-III pyridoxal-phosphate-dependent aminotransferase family. HemL subfamily. As to quaternary structure, homodimer. The cofactor is pyridoxal 5'-phosphate.

It localises to the cytoplasm. The catalysed reaction is (S)-4-amino-5-oxopentanoate = 5-aminolevulinate. The protein operates within porphyrin-containing compound metabolism; protoporphyrin-IX biosynthesis; 5-aminolevulinate from L-glutamyl-tRNA(Glu): step 2/2. The polypeptide is Glutamate-1-semialdehyde 2,1-aminomutase (Pseudomonas paraeruginosa (strain DSM 24068 / PA7) (Pseudomonas aeruginosa (strain PA7))).